Reading from the N-terminus, the 640-residue chain is Threonine--tRNA ligase (640 aa).

Residues 1-60 form the TGS domain; the sequence is MKITFPDGAVKEFEPGVSTADIAASISPGLKKKALAGKLNGELLDLVTPIHEDGAIEIVT. The tract at residues 241-538 is catalytic; sequence DHRKLGKELE…LIEEYKGAFP (298 aa). 3 residues coordinate Zn(2+): cysteine 334, histidine 385, and histidine 515.

The protein belongs to the class-II aminoacyl-tRNA synthetase family. As to quaternary structure, homodimer. The cofactor is Zn(2+).

The protein localises to the cytoplasm. The enzyme catalyses tRNA(Thr) + L-threonine + ATP = L-threonyl-tRNA(Thr) + AMP + diphosphate + H(+). In terms of biological role, catalyzes the attachment of threonine to tRNA(Thr) in a two-step reaction: L-threonine is first activated by ATP to form Thr-AMP and then transferred to the acceptor end of tRNA(Thr). Also edits incorrectly charged L-seryl-tRNA(Thr). This is Threonine--tRNA ligase from Listeria welshimeri serovar 6b (strain ATCC 35897 / DSM 20650 / CCUG 15529 / CIP 8149 / NCTC 11857 / SLCC 5334 / V8).